Consider the following 449-residue polypeptide: Tubulin alpha chain (449 aa).

GTP is bound by residues Gln-11, Glu-71, Ser-140, Gly-144, Thr-145, Thr-179, Asn-206, and Asn-228. Glu-71 contacts Mg(2+). The active site involves Glu-254.

Belongs to the tubulin family. Dimer of alpha and beta chains. A typical microtubule is a hollow water-filled tube with an outer diameter of 25 nm and an inner diameter of 15 nM. Alpha-beta heterodimers associate head-to-tail to form protofilaments running lengthwise along the microtubule wall with the beta-tubulin subunit facing the microtubule plus end conferring a structural polarity. Microtubules usually have 13 protofilaments but different protofilament numbers can be found in some organisms and specialized cells. Requires Mg(2+) as cofactor.

Its subcellular location is the cytoplasm. The protein localises to the cytoskeleton. It carries out the reaction GTP + H2O = GDP + phosphate + H(+). In terms of biological role, tubulin is the major constituent of microtubules, a cylinder consisting of laterally associated linear protofilaments composed of alpha- and beta-tubulin heterodimers. Microtubules grow by the addition of GTP-tubulin dimers to the microtubule end, where a stabilizing cap forms. Below the cap, tubulin dimers are in GDP-bound state, owing to GTPase activity of alpha-tubulin. This is Tubulin alpha chain (TUBA) from Sordaria macrospora (strain ATCC MYA-333 / DSM 997 / K(L3346) / K-hell).